The following is a 417-amino-acid chain: NADH-quinone oxidoreductase subunit D (417 aa).

It belongs to the complex I 49 kDa subunit family. NDH-1 is composed of 14 different subunits. Subunits NuoB, C, D, E, F, and G constitute the peripheral sector of the complex.

The protein resides in the cell inner membrane. The catalysed reaction is a quinone + NADH + 5 H(+)(in) = a quinol + NAD(+) + 4 H(+)(out). NDH-1 shuttles electrons from NADH, via FMN and iron-sulfur (Fe-S) centers, to quinones in the respiratory chain. The immediate electron acceptor for the enzyme in this species is believed to be ubiquinone. Couples the redox reaction to proton translocation (for every two electrons transferred, four hydrogen ions are translocated across the cytoplasmic membrane), and thus conserves the redox energy in a proton gradient. This is NADH-quinone oxidoreductase subunit D from Chromobacterium violaceum (strain ATCC 12472 / DSM 30191 / JCM 1249 / CCUG 213 / NBRC 12614 / NCIMB 9131 / NCTC 9757 / MK).